The following is a 1150-amino-acid chain: uncharacterized protein (1150 aa).

Belongs to the TMEM1 family.

This is an uncharacterized protein from Schizosaccharomyces pombe (strain 972 / ATCC 24843) (Fission yeast).